Here is a 197-residue protein sequence, read N- to C-terminus: Recombination protein RecR (197 aa).

The C4-type zinc-finger motif lies at C56–C71. The region spanning E79–P174 is the Toprim domain.

Belongs to the RecR family.

Functionally, may play a role in DNA repair. It seems to be involved in an RecBC-independent recombinational process of DNA repair. It may act with RecF and RecO. The polypeptide is Recombination protein RecR (Gloeobacter violaceus (strain ATCC 29082 / PCC 7421)).